The primary structure comprises 388 residues: MNLHEYQGKQLFKEFGLPVSEGYACDTADEAVEAAKRIGGDIWVVKCQVHAGGRGKAGGVKLVKSLDDVRAFAEQWLGKNLVTFQTDEKGQPVAKILVESCTDIADELYLGAVVDRASRKIVFMASTEGGVEIETVAEETPEKILKAEIDPTVGAQPYQGRELGFKLGLTPDQVKQFTKVFMGLAKMFEQYDLALLEINPLVITDEGNVHCLDAKVGIDSNALYRQPKIREMHDPSQDDAREAEAAKWELNYVALDGNIGCMVNGAGLAMGTMDIVKLSGGEPANFLDVGGGATKERVSEAFKIILSDSSVKAVLVNIFGGIVRCDMIAEGIIGAVEEVGVKVPVIVRLEGNNAELGTQKLNESGLNIIAAESLSDAADKVVAAAGGQ.

The 236-residue stretch at 9–244 folds into the ATP-grasp domain; the sequence is KQLFKEFGLP…PSQDDAREAE (236 aa). ATP is bound by residues lysine 46, 53–55, glutamate 99, threonine 102, and glutamate 107; that span reads GRG. Mg(2+) contacts are provided by asparagine 199 and aspartate 213. Substrate-binding positions include asparagine 264 and 321-323; that span reads GIV.

The protein belongs to the succinate/malate CoA ligase beta subunit family. As to quaternary structure, heterotetramer of two alpha and two beta subunits. It depends on Mg(2+) as a cofactor.

It catalyses the reaction succinate + ATP + CoA = succinyl-CoA + ADP + phosphate. The catalysed reaction is GTP + succinate + CoA = succinyl-CoA + GDP + phosphate. It participates in carbohydrate metabolism; tricarboxylic acid cycle; succinate from succinyl-CoA (ligase route): step 1/1. Succinyl-CoA synthetase functions in the citric acid cycle (TCA), coupling the hydrolysis of succinyl-CoA to the synthesis of either ATP or GTP and thus represents the only step of substrate-level phosphorylation in the TCA. The beta subunit provides nucleotide specificity of the enzyme and binds the substrate succinate, while the binding sites for coenzyme A and phosphate are found in the alpha subunit. The sequence is that of Succinate--CoA ligase [ADP-forming] subunit beta from Idiomarina loihiensis (strain ATCC BAA-735 / DSM 15497 / L2-TR).